The sequence spans 398 residues: Nonsense-mediated decay protein 4 (398 aa).

Positions 327–355 are disordered; sequence PVTSNYRGKNNRGRNNRGRRGNKRRERER. A compositionally biased stretch (basic residues) spans 335 to 350; that stretch reads KNNRGRNNRGRRGNKR.

Its subcellular location is the cytoplasm. Its function is as follows. Involved in nonsense-mediated decay of mRNAs containing premature stop codons. This chain is Nonsense-mediated decay protein 4 (NMD4), found in Candida albicans (strain SC5314 / ATCC MYA-2876) (Yeast).